Here is an 884-residue protein sequence, read N- to C-terminus: MGGTDKFRYPSVWLCGLLCLLQVVPSINVDVSGCQPGFSSANYTFSVNRRELERGRKLGKVNLVDCTTRKHGLYDVGDSRFRVLPDGTVLVKRHVKLHSKDTRFTISTWDARGIKHSTNISVVNKRHRSGEEARSRSSELPVLTFPEKHTGLKRKKRDWVIPPIKVSENERGPFPKRLVQIKSNKEKLSKVFYSITGQGADTPPEGIFRIEKETGWMQVTRPLDREEYEKYVLLSHAVSENGASVEEPMEITVTVIDQNDNRPKFTQPVFRGSVREGVQPGTKVMSVSATDDDDSIDSLNGVIAYSILKQDPEEPIPNLFTINRETGVISLIGTGLDREKFPEYTLTVQAADLDGAGLTAEGKAVIEITDANDNAPIFDPKTYTALVPENEVGFEVQRLSVTDLDMPGTAAWQAVYKIRVNEGGFFNITTDPESNQGILTTAKGLDFEVRKQYVIQITVENAVPFSVPLPTSTATVTVTVEDVNEAPVFVPVVSRVDVSEDLTRGEKIVSLVAQDPDKQQIQKLSYFIGNDPARWLTINKDNGIVTGNGNLDRESEYVKNNTYTVIMLVTDDGVPVGTGTGTLILHVLDINDNGPVPSPRVFTMCDQNPEPQVLTITDADIPPNTYPYSVSLSHGSELTWKAELDSKGTSMRLSPTQQLKKGDYSIYVLLADAQANRQLTVVNATVCICEGKAIKCQEKLVAGFDLPIILVILGSILALLILSLLLLLFLKRKKVVKEPLLLPEDDTRDNIFYYGEEGGGEEDQDYDLSQLHRGLDARPDIMRNDVVPTLMSVPHYRPRPSNPDEIGNFIDENLDAADNDPTAPPYDSLLVFDYEGSGSEAASLSSLNSSNSNNEHDYNYLNDWGPRFRKLADMYGGDDDDDEE.

Residues 1 to 26 form the signal peptide; sequence MGGTDKFRYPSVWLCGLLCLLQVVPS. The propeptide occupies 27–157; that stretch reads INVDVSGCQP…KHTGLKRKKR (131 aa). Cadherin domains lie at 158–265, 266–378, 379–489, 490–595, and 596–706; these read DWVI…RPKF, TQPV…APIF, DPKT…APVF, VPVV…DNGP, and VPSP…GFDL. At 158-706 the chain is on the extracellular side; it reads DWVIPPIKVS…QEKLVAGFDL (549 aa). N-linked (GlcNAc...) asparagine glycosylation is found at Asn427, Asn560, and Asn683. The chain crosses the membrane as a helical span at residues 707 to 730; sequence PIILVILGSILALLILSLLLLLFL. The Cytoplasmic portion of the chain corresponds to 731–884; that stretch reads KRKKVVKEPL…YGGDDDDDEE (154 aa).

In terms of tissue distribution, expressed in pituitary gland, lung and kidney.

Its subcellular location is the cell membrane. Functionally, cadherins are calcium-dependent cell adhesion proteins. They preferentially interact with themselves in a homophilic manner in connecting cells; cadherins may thus contribute to the sorting of heterogeneous cell types. The sequence is that of Blastomere cadherin from Xenopus laevis (African clawed frog).